The following is a 257-amino-acid chain: NH(3)-dependent NAD(+) synthetase (257 aa).

28–35 (GISGGVDS) is a binding site for ATP. Residue D34 coordinates Mg(2+). R109 contributes to the deamido-NAD(+) binding site. T129 contributes to the ATP binding site. E134 provides a ligand contact to Mg(2+). Residues K142 and D149 each contribute to the deamido-NAD(+) site. ATP contacts are provided by K158 and S180. 240–241 (HK) is a binding site for deamido-NAD(+).

This sequence belongs to the NAD synthetase family. Homodimer.

The enzyme catalyses deamido-NAD(+) + NH4(+) + ATP = AMP + diphosphate + NAD(+) + H(+). It functions in the pathway cofactor biosynthesis; NAD(+) biosynthesis; NAD(+) from deamido-NAD(+) (ammonia route): step 1/1. In terms of biological role, catalyzes the ATP-dependent amidation of deamido-NAD to form NAD. Uses ammonia as a nitrogen source. In Pyrococcus horikoshii (strain ATCC 700860 / DSM 12428 / JCM 9974 / NBRC 100139 / OT-3), this protein is NH(3)-dependent NAD(+) synthetase.